Here is an 893-residue protein sequence, read N- to C-terminus: Sulfate permease 2 (893 aa).

The tract at residues 1–25 is disordered; sequence MSREGYPNFEEVEIPDFQETNNTVP. The Cytoplasmic portion of the chain corresponds to 1–131; sequence MSREGYPNFE…VFPIINWLPH (131 aa). The helical transmembrane segment at 132 to 152 threads the bilayer; sequence YNFSWFTADLIAGITIGCVLV. The Extracellular segment spans residues 153–163; it reads PQSMSYAQVAT. Residues 164–184 form a helical membrane-spanning segment; the sequence is LPAQYGLYSSFIGAYSYSFFA. Residues 185–188 are Cytoplasmic-facing; that stretch reads TSKD. A helical transmembrane segment spans residues 189-209; that stretch reads VCIGPVAVMSLQTAKVIADVT. Residues 210-221 lie on the Extracellular side of the membrane; it reads AKYPDGDSAITG. The chain crosses the membrane as a helical span at residues 222–242; it reads PVIATTLALLCGIISAAVGFL. At 243 to 244 the chain is on the cytoplasmic side; it reads RL. A helical membrane pass occupies residues 245 to 265; it reads GFLVELISLNAVAGFMTGSAF. The Extracellular segment spans residues 266 to 305; sequence NILWGQVPALMGYNSLVNTRAATYKVVIETLKHLPDTKLD. A helical membrane pass occupies residues 306-326; it reads AVFGLIPLFLLYVWKWWCGTY. Residues 327 to 350 are Cytoplasmic-facing; the sequence is GPRLNDRYNSKNPRLHKIIKWTYF. A helical membrane pass occupies residues 351-371; that stretch reads YAQASRNGIIIIVFTCIGWAI. Topologically, residues 372–399 are extracellular; it reads TRGKSKSERPISILGSVPSGLKEVGVFH. A helical transmembrane segment spans residues 400 to 420; it reads VPPGLMSKLGPNLPASIIVLL. Residues 421–443 are Cytoplasmic-facing; the sequence is LEHIAISKSFGRINDYKVVPDQE. Residues 444–464 form a helical membrane-spanning segment; that stretch reads LIAIGVSNLLGTFFNAYPATG. The Extracellular portion of the chain corresponds to 465 to 483; that stretch reads SFSRSALKAKCNVRTPLSG. Residues 484-504 form a helical membrane-spanning segment; the sequence is LFSGSCVLLALYCLTGAFFYI. The Cytoplasmic segment spans residues 505-532; it reads PKATLSAVIIHAVSDLLASYQTTWNFWK. The helical transmembrane segment at 533–551 threads the bilayer; sequence MNPLDFICFIVTVLITVFA. Topologically, residues 552–559 are extracellular; sequence SIEDGIYF. Residues 560–580 form a helical membrane-spanning segment; sequence AMCWSCAMLILKVAFPAGKFL. The Cytoplasmic segment spans residues 581–893; that stretch reads GRVEVAEVTD…DIPDFAKWDI (313 aa). An STAS domain is found at 676–854; sequence DVQILPPPDG…SIVAGHTSYH (179 aa).

The protein belongs to the SLC26A/SulP transporter (TC 2.A.53) family.

The protein localises to the membrane. In terms of biological role, high affinity uptake of sulfate into the cell. This Saccharomyces cerevisiae (strain ATCC 204508 / S288c) (Baker's yeast) protein is Sulfate permease 2 (SUL2).